Reading from the N-terminus, the 56-residue chain is Alpha-pompilidotoxin (56 aa).

Positions 1–22 (MFKQLILLALAAVFLLINISSA) are cleaved as a signal peptide. Residues 23 to 42 (EPAAEPNANAEPLAEASAEP) constitute a propeptide that is removed on maturation. Position 55 is a leucine amide (Leu-55).

In terms of tissue distribution, expressed by the venom gland.

Its subcellular location is the secreted. Inhibits sodium channels (Nav) inactivation. Shows two types of inhibitory activities on channels. Inhibition of hNav1.6/SCN8A shows a large increase in the steady-state current component without any increase in the slow component, whereas inhibition of hNav1.1/SCN1A, hNav1.2/SCN2A, hNav1.3/SCN3A and hNav1.7/SCN9A shows a large increase in the slow component with only a small steady-state component. Is 5-fold less potent than beta-PMTX for inducing repetitive action potentials in lobster neuromuscular junctions. The chain is Alpha-pompilidotoxin from Anoplius samariensis (Solitary wasp).